Reading from the N-terminus, the 440-residue chain is Cytochrome P450 monooygenase 1 (440 aa).

Position 381 (C381) interacts with heme.

This sequence belongs to the cytochrome P450 family. Heme is required as a cofactor.

It functions in the pathway plant hormone biosynthesis; gibberellin biosynthesis. GA14 synthase; part of the gene cluster that mediates the biosynthesis of gibberellins (GAs), diterpenoids that may provide a selective advantage during infection of the preferred host plant, rice. Gibberellins (GAs) are diterpenoids and are synthesized via the mevalonate pathway. Biosynthesis of the major metabolite GA3 (gibberellic acid) from geranylgeranyl diphosphate (GGPP) requires 13 steps. The GGPP produced by the geranylgeranyl diphosphate synthase GGS2 is converted to ent-kaurene via ent-copalyldiphosphate in a two-step cyclization reaction performed by the bifunctional ent-copalyl diphosphate synthase/ent-kaurene synthase enzyme (CPS/KS). Ent-Kaurene is metabolized to GAs by a series of oxidation reactions catalyzed by cytochrome P450 monooxygenases. Cytochrome P450 monooxygenase P450-4 is an ent-kaurene oxidase that catalyzes the three oxidation steps between ent-kaurene and ent-kaurenoic acid. The highly multifunctional cytochrome P450 monooxygenase P450-1 then catalyzes four steps involving oxidation at two carbon atoms, in the main pathway from ent-kaurenoic acid to GA14 via GA12-aldehyde as well as producing kaurenolides and fujenoic acids as by-products. The cytochrome P450 monooxygenase P450-2 then converts GA14 to GA4 by removal of C-20. GA4 is further converted to GA7 by the GA4 desaturase DES via 1,2-desaturation before cytochrome P450 monooxygenase P450-3, a 13-hydroxylase, hydroxylates GA7 to GA3, the final product of the GA-biosynthetic pathway. This is Cytochrome P450 monooygenase 1 from Gibberella fujikuroi (strain CBS 195.34 / IMI 58289 / NRRL A-6831) (Bakanae and foot rot disease fungus).